The sequence spans 558 residues: Protein OS-9 homolog (558 aa).

The N-terminal stretch at 1-17 is a signal peptide; the sequence is MLLKSLALIASSSLAAT. An N-linked (GlcNAc...) asparagine glycan is attached at Asn68. An MRH domain is found at 111–237; the sequence is GDCLFYEQGF…QVGTPRLCKD (127 aa). Cysteines 113 and 126 form a disulfide. A mannooligosaccharide derivative-binding residues include Gln133, Arg197, Glu219, and Tyr225. Disulfide bonds link Cys190–Cys223 and Cys205–Cys235. 2 disordered regions span residues 435–508 and 539–558; these read SKKL…DEDE and KDLA…GLSD. Positions 441–466 are enriched in basic and acidic residues; the sequence is KKEAASTKREEAKKQVEASVEEKAVD. The segment covering 474–492 has biased composition (polar residues); sequence DTVTSTQTFFRTQTLSTAE. Acidic residues predominate over residues 543 to 558; the sequence is DKEDDDDDYEDYGLSD.

Belongs to the OS-9 family. As to quaternary structure, interacts with missfolded ER lumenal proteins.

Its subcellular location is the endoplasmic reticulum membrane. Lectin involved in the quality control of the secretory pathway. As a member of the endoplasmic reticulum-associated degradation lumenal (ERAD-L) surveillance system, targets misfolded endoplasmic reticulum lumenal glycoproteins for degradation. The sequence is that of Protein OS-9 homolog (YOS9) from Yarrowia lipolytica (strain CLIB 122 / E 150) (Yeast).